Consider the following 185-residue polypeptide: Translation initiation factor IF-3 (185 aa).

It belongs to the IF-3 family. Monomer.

The protein localises to the cytoplasm. Its function is as follows. IF-3 binds to the 30S ribosomal subunit and shifts the equilibrium between 70S ribosomes and their 50S and 30S subunits in favor of the free subunits, thus enhancing the availability of 30S subunits on which protein synthesis initiation begins. The polypeptide is Translation initiation factor IF-3 (Streptococcus pneumoniae serotype 19F (strain G54)).